The chain runs to 313 residues: Acetaldehyde dehydrogenase 1 (313 aa).

16-19 (SGNI) lines the NAD(+) pocket. Residue Cys-131 is the Acyl-thioester intermediate of the active site. Residues 162 to 170 (SAGPGTRAN) and Asn-281 each bind NAD(+).

It belongs to the acetaldehyde dehydrogenase family.

It catalyses the reaction acetaldehyde + NAD(+) + CoA = acetyl-CoA + NADH + H(+). The chain is Acetaldehyde dehydrogenase 1 from Mycobacterium sp. (strain JLS).